Here is a 142-residue protein sequence, read N- to C-terminus: Small heat shock protein IbpB (142 aa).

One can recognise a sHSP domain in the interval 25 to 136 (GQEPQGFPPY…QPQRIAIGTT (112 aa)).

This sequence belongs to the small heat shock protein (HSP20) family. In terms of assembly, homodimer. Forms homomultimers of about 100-150 subunits at optimal growth temperatures. Conformation changes to oligomers at high temperatures or high ionic concentrations. The decrease in size of the multimers is accompanied by an increase in chaperone activity.

It localises to the cytoplasm. Associates with aggregated proteins, together with IbpA, to stabilize and protect them from irreversible denaturation and extensive proteolysis during heat shock and oxidative stress. Aggregated proteins bound to the IbpAB complex are more efficiently refolded and reactivated by the ATP-dependent chaperone systems ClpB and DnaK/DnaJ/GrpE. Its activity is ATP-independent. In Serratia proteamaculans (strain 568), this protein is Small heat shock protein IbpB.